Here is a 187-residue protein sequence, read N- to C-terminus: Elongation factor P (187 aa).

It belongs to the elongation factor P family.

The protein resides in the cytoplasm. It functions in the pathway protein biosynthesis; polypeptide chain elongation. Its function is as follows. Involved in peptide bond synthesis. Stimulates efficient translation and peptide-bond synthesis on native or reconstituted 70S ribosomes in vitro. Probably functions indirectly by altering the affinity of the ribosome for aminoacyl-tRNA, thus increasing their reactivity as acceptors for peptidyl transferase. The polypeptide is Elongation factor P (Brachyspira hyodysenteriae (strain ATCC 49526 / WA1)).